The following is a 106-amino-acid chain: Glutaredoxin-1 (106 aa).

Alanine 2 carries the post-translational modification N-acetylalanine. The region spanning 3 to 106 is the Glutaredoxin domain; that stretch reads QEFVNCKIQP…TRLKQIGALQ (104 aa). Lysine 9 carries the N6-succinyllysine modification. 2 disulfides stabilise this stretch: cysteine 23/cysteine 26 and cysteine 79/cysteine 83.

The protein belongs to the glutaredoxin family.

It localises to the cytoplasm. Has a glutathione-disulfide oxidoreductase activity in the presence of NADPH and glutathione reductase. Reduces low molecular weight disulfides and proteins. The polypeptide is Glutaredoxin-1 (GLRX) (Homo sapiens (Human)).